The sequence spans 517 residues: Recombining binding protein suppressor of hairless-like protein (517 aa).

Positions 26–37 are enriched in basic and acidic residues; sequence EMQLQSEADRRS. The tract at residues 26 to 48 is disordered; that stretch reads EMQLQSEADRRSLPGTWTRSSPE. 3 DNA-binding regions span residues 78-88, 193-198, and 220-225; these read QKSYGNEKRFF, SKPSQK, and RLRSQT. The region spanning 387–512 is the IPT/TIG domain; sequence LISTLELSGG…HQEFTRTNFH (126 aa).

It belongs to the Su(H) family. In terms of assembly, interacts weakly with EBNA2. Does not interact with any Notch proteins.

It localises to the nucleus. Its function is as follows. Putative transcription factor, which cooperates with EBNA2 to activate transcription. This Homo sapiens (Human) protein is Recombining binding protein suppressor of hairless-like protein (RBPJL).